Consider the following 338-residue polypeptide: Phytanoyl-CoA dioxygenase, peroxisomal (338 aa).

Residues methionine 1–threonine 30 constitute a peroxisome transit peptide. N6-succinyllysine is present on residues lysine 59 and lysine 108. 2-oxoglutarate-binding positions include lysine 120, methionine 157, histidine 175–aspartate 177, and tryptophan 193. Fe cation is bound by residues histidine 175 and aspartate 177. 2 positions are modified to N6-succinyllysine: lysine 231 and lysine 252. Residue histidine 264 coordinates Fe cation. The 2-oxoglutarate site is built by serine 266 and arginine 275. A Phosphoserine modification is found at serine 317.

It belongs to the PhyH family. Interacts with FKBP52. Interacts with PHYHIP. Fe cation serves as cofactor. It depends on L-ascorbate as a cofactor. The cofactor is ATP. Mg(2+) is required as a cofactor. In terms of tissue distribution, expressed in liver, kidney, and T-cells, but not in spleen, brain, heart, lung and skeletal muscle.

The protein localises to the peroxisome. It catalyses the reaction phytanoyl-CoA + 2-oxoglutarate + O2 = 2-hydroxyphytanoyl-CoA + succinate + CO2. The catalysed reaction is 3-methylhexadecanoyl-CoA + 2-oxoglutarate + O2 = 2-hydroxy-3-methylhexadecanoyl-CoA + succinate + CO2. It carries out the reaction hexadecanoyl-CoA + 2-oxoglutarate + O2 = 2-hydroxyhexadecanoyl-CoA + succinate + CO2. The enzyme catalyses octanoyl-CoA + 2-oxoglutarate + O2 = 2-hydroxyoctanoyl-CoA + succinate + CO2. It catalyses the reaction decanoyl-CoA + 2-oxoglutarate + O2 = 2-hydroxydecanoyl-CoA + succinate + CO2. The catalysed reaction is 3-methylbutanoyl-CoA + 2-oxoglutarate + O2 = 2-hydroxy-3-methylbutanoyl-CoA + succinate + CO2. It carries out the reaction heptadecanoyl-CoA + 2-oxoglutarate + O2 = 2-hydroxyheptadecanoyl-CoA + succinate + CO2. The enzyme catalyses eicosanoyl-CoA + 2-oxoglutarate + O2 = 2-hydroxyeicosanoyl-CoA + succinate + CO2. It catalyses the reaction octadecanoyl-CoA + 2-oxoglutarate + O2 = 2-hydroxyoctadecanoyl-CoA + succinate + CO2. The catalysed reaction is dodecanoyl-CoA + 2-oxoglutarate + O2 = 2-hydroxydodecanoyl-CoA + succinate + CO2. It carries out the reaction tetradecanoyl-CoA + 2-oxoglutarate + O2 = 2-hydroxytetradecanoyl-CoA + succinate + CO2. The enzyme catalyses hexanoyl-CoA + 2-oxoglutarate + O2 = 2-hydroxyhexanoyl-CoA + succinate + CO2. It catalyses the reaction butanoyl-CoA + 2-oxoglutarate + O2 = 2-hydroxybutanoyl-CoA + succinate + CO2. The catalysed reaction is 3-methylnonanoyl-CoA + 2-oxoglutarate + O2 = 2-hydroxy-3-methylnonanoyl-CoA + succinate + CO2. It carries out the reaction 3-methylundecanoyl-CoA + 2-oxoglutarate + O2 = 2-hydroxy-3-methylundecanoyl-CoA + succinate + CO2. The enzyme catalyses 3-methyldodecanoyl-CoA + 2-oxoglutarate + O2 = 2-hydroxy-3-methyldodecanoyl-CoA + succinate + CO2. It participates in lipid metabolism; fatty acid metabolism. Functionally, catalyzes the 2-hydroxylation of not only racemic phytanoyl-CoA and the isomers of 3-methylhexadecanoyl-CoA, but also a variety of other mono-branched 3-methylacyl-CoA esters (with a chain length of at least seven carbon atoms) and straight-chain acyl-CoA esters (with a chain length longer than four carbon atoms). Does not hydroxylate long and very long straight chain acyl-CoAs or 2-methyl- and 4-methyl-branched acyl-CoAs. This chain is Phytanoyl-CoA dioxygenase, peroxisomal (PHYH), found in Homo sapiens (Human).